Consider the following 143-residue polypeptide: Small ribosomal subunit protein bS6 (143 aa).

A disordered region spans residues 100 to 143 (SPIIKMKDERREVVELTTSGSEDNQKDHHKEDLDKKTDEFSEEN). Composition is skewed to basic and acidic residues over residues 104–113 (KMKDERREVV) and 122–143 (DNQKDHHKEDLDKKTDEFSEEN).

The protein belongs to the bacterial ribosomal protein bS6 family.

Binds together with bS18 to 16S ribosomal RNA. The polypeptide is Small ribosomal subunit protein bS6 (Hamiltonella defensa subsp. Acyrthosiphon pisum (strain 5AT)).